The chain runs to 558 residues: AP2-like ethylene-responsive transcription factor AIL5 (558 aa).

The span at 1–54 (MKNNNNKSSSSSSYDSSLSPSSSSSSHQNWLSFSLSNNNNNFNSSSNPNLTSST) shows a compositional bias: low complexity. 3 disordered regions span residues 1–65 (MKNN…PSHL), 74–93 (SPVE…ATAV), and 166–195 (HSSE…KNVE). DNA-binding regions (AP2/ERF) lie at residues 203-269 (IYRG…TNFP) and 305-363 (MYRG…TNFD). Positions 387-406 (SPATAAADKTVDLSPSDSPS) are disordered.

Belongs to the AP2/ERF transcription factor family. AP2 subfamily. In terms of tissue distribution, expressed in roots, seedlings, inflorescence, and siliques. Also detected at low levels in leaves.

Its subcellular location is the nucleus. Functionally, probably acts as a transcriptional activator. Binds to the GCC-box pathogenesis-related promoter element. May be involved in the regulation of gene expression by stress factors and by components of stress signal transduction pathways. Involved in the regulation of floral organs size. This Arabidopsis thaliana (Mouse-ear cress) protein is AP2-like ethylene-responsive transcription factor AIL5.